A 356-amino-acid polypeptide reads, in one-letter code: Phosphoribosyl pyrophosphate synthase-associated protein 1 (356 aa).

Residue Met1 is modified to N-acetylmethionine. 2 positions are modified to phosphoserine: Ser177 and Ser215.

It belongs to the ribose-phosphate pyrophosphokinase family. Binds to PRPS1 and PRPS2.

Functionally, seems to play a negative regulatory role in 5-phosphoribose 1-diphosphate synthesis. This Bos taurus (Bovine) protein is Phosphoribosyl pyrophosphate synthase-associated protein 1 (PRPSAP1).